The primary structure comprises 206 residues: Interleukin-24 (206 aa).

The signal sequence occupies residues 1 to 51; that stretch reads MNFQQRLQSLWTLARPFCPPLLATASQMQMVVLPCLGFTLLLWSQVSGAQG. Residues Cys-59 and Cys-106 are joined by a disulfide bond. 2 N-linked (GlcNAc...) asparagine glycosylation sites follow: Asn-85 and Asn-99. Lys-122 participates in a covalent cross-link: Glycyl lysine isopeptide (Lys-Gly) (interchain with G-Cter in ubiquitin). An N-linked (GlcNAc...) asparagine glycan is attached at Asn-126.

Belongs to the IL-10 family. Post-translationally, glycosylated. Ubiquitination at Lys-122 promotes proteasomal degradation. In terms of tissue distribution, up-regulated in melanoma cells induced to terminally differentiate.

It localises to the secreted. Functionally, multifunctional cytokine mainly produced by T-cells that plays a regulatory role in immune response, tissue homeostasis, host defense, and oncogenesis. Possesses antiviral functions and induces the type I interferon response during influenza infection. Signals through two receptor complexes IL20RA/IL20RB or IL20RB/IL22RA1. In turn, stimulates the JAK1-STAT3 and MAPK pathways and promotes the secretion of pro-inflammatory mediators including IL8 and MMP1. Intracellularly, maintains endoplasmic reticulum homeostasis by restricting the eIF2alpha-CHOP pathway-mediated stress signal. In addition, acts as a quality control mechanism for the ubiquitin proteasome system by alerting the cell to proteasome dysfunction through activation of PKR/EIF2AK2. This chain is Interleukin-24 (IL24), found in Homo sapiens (Human).